The following is a 100-amino-acid chain: Cystatin-B (100 aa).

Residues 6 to 88 form the Cystatin domain; the sequence is GGISAPLDAD…GGGLELSGMQ (83 aa). The Secondary area of contact signature appears at 48-52; the sequence is QIVSG.

Belongs to the cystatin family. In terms of tissue distribution, widely expressed. Highly expressed in liver and to a lesser extent in spleen, gill, brain, intestine, kidney, head kidney and blood. Lowest level in muscle.

It localises to the cytoplasm. Thiol protease inhibitor. Has papain inhibitory activity in vitro. May be involved in immune responses against invading Gram-negative bacteria. The protein is Cystatin-B of Oplegnathus fasciatus (Barred knifejaw).